The chain runs to 326 residues: Malate dehydrogenase (326 aa).

NAD(+) is bound at residue 11–17 (GAAGQIG). Substrate is bound by residues Arg-92 and Arg-98. Residues Asn-105, Gln-112, and 129-131 (VGN) contribute to the NAD(+) site. Substrate contacts are provided by Asn-131 and Arg-162. The Proton acceptor role is filled by His-187.

It belongs to the LDH/MDH superfamily. MDH type 2 family.

It catalyses the reaction (S)-malate + NAD(+) = oxaloacetate + NADH + H(+). In terms of biological role, catalyzes the reversible oxidation of malate to oxaloacetate. This Leptospira borgpetersenii serovar Hardjo-bovis (strain JB197) protein is Malate dehydrogenase.